We begin with the raw amino-acid sequence, 230 residues long: Phosphoribosylformylglycinamidine synthase subunit PurQ (230 aa).

The 225-residue stretch at 2-226 folds into the Glutamine amidotransferase type-1 domain; it reads RVAVIVFPGS…LKTWREQNSV (225 aa). C86 acts as the Nucleophile in catalysis. Residues H195 and E197 contribute to the active site.

Part of the FGAM synthase complex composed of 1 PurL, 1 PurQ and 2 PurS subunits.

It is found in the cytoplasm. It catalyses the reaction N(2)-formyl-N(1)-(5-phospho-beta-D-ribosyl)glycinamide + L-glutamine + ATP + H2O = 2-formamido-N(1)-(5-O-phospho-beta-D-ribosyl)acetamidine + L-glutamate + ADP + phosphate + H(+). It carries out the reaction L-glutamine + H2O = L-glutamate + NH4(+). The protein operates within purine metabolism; IMP biosynthesis via de novo pathway; 5-amino-1-(5-phospho-D-ribosyl)imidazole from N(2)-formyl-N(1)-(5-phospho-D-ribosyl)glycinamide: step 1/2. Its function is as follows. Part of the phosphoribosylformylglycinamidine synthase complex involved in the purines biosynthetic pathway. Catalyzes the ATP-dependent conversion of formylglycinamide ribonucleotide (FGAR) and glutamine to yield formylglycinamidine ribonucleotide (FGAM) and glutamate. The FGAM synthase complex is composed of three subunits. PurQ produces an ammonia molecule by converting glutamine to glutamate. PurL transfers the ammonia molecule to FGAR to form FGAM in an ATP-dependent manner. PurS interacts with PurQ and PurL and is thought to assist in the transfer of the ammonia molecule from PurQ to PurL. This is Phosphoribosylformylglycinamidine synthase subunit PurQ from Brevibacillus brevis (strain 47 / JCM 6285 / NBRC 100599).